The primary structure comprises 621 residues: F-box/LRR-repeat protein 4 (621 aa).

Arg28 carries the asymmetric dimethylarginine modification. An F-box domain is found at 277-332; it reads NGYFDKLPYELIQLILNHLSLPDLCRLAQTCRLLHQHCCDPLQYIHLNLQPYWARL. 9 LRR repeats span residues 376–397, 402–421, 427–448, 452–474, 480–501, 504–524, 532–558, 559–583, and 584–609; these read ELVR…EVIS, NLQD…AFGH, SLKR…SILN, ELQH…ASMI, NLRT…AELA, CVLL…STGC, LPNL…ASNC, TRLQ…LLES, and CKDL…LNAS.

As to quaternary structure, part of a SCF (SKP1-CUL1-F-box) protein ligase complex. Interacts with FAF2 and VCP. Interacts with PPTC7; this interaction promotes destruction of BNIP3 and NIX and mitophagy suppression.

The protein localises to the cytoplasm. The protein resides in the nucleus. It localises to the mitochondrion outer membrane. Functionally, substrate-recognition component of the mitochondria-localized SCF-FBXL4 ubiquitin E3 ligase complex that plays a role in the restriction of mitophagy by controlling the degradation of BNIP3 and NIX mitophagy receptors. Also rescues mitochondrial injury through reverting hyperactivation of DRP1-mediated mitochondrial fission. The polypeptide is F-box/LRR-repeat protein 4 (Fbxl4) (Mus musculus (Mouse)).